The primary structure comprises 224 residues: Aminopyrimidine aminohydrolase (224 aa).

Asp44 lines the substrate pocket. The Nucleophile role is filled by Cys135. Positions 139 and 165 each coordinate substrate. The active-site Proton donor is Glu207.

It belongs to the TenA family. In terms of assembly, homotetramer.

The catalysed reaction is 4-amino-5-aminomethyl-2-methylpyrimidine + H2O = 4-amino-5-hydroxymethyl-2-methylpyrimidine + NH4(+). The enzyme catalyses thiamine + H2O = 5-(2-hydroxyethyl)-4-methylthiazole + 4-amino-5-hydroxymethyl-2-methylpyrimidine + H(+). The protein operates within cofactor biosynthesis; thiamine diphosphate biosynthesis. Its function is as follows. Catalyzes an amino-pyrimidine hydrolysis reaction at the C5' of the pyrimidine moiety of thiamine compounds, a reaction that is part of a thiamine salvage pathway. Thus, catalyzes the conversion of 4-amino-5-aminomethyl-2-methylpyrimidine to 4-amino-5-hydroxymethyl-2-methylpyrimidine (HMP). To a lesser extent, is also able to catalyze the hydrolytic cleavage of thiamine; however, this thiaminase activity is unlikely to be physiologically relevant. Therefore, is involved in the regeneration of the thiamine pyrimidine from thiamine degraded products present in the environment, rather than in thiamine degradation. The chain is Aminopyrimidine aminohydrolase from Halalkalibacterium halodurans (strain ATCC BAA-125 / DSM 18197 / FERM 7344 / JCM 9153 / C-125) (Bacillus halodurans).